A 317-amino-acid chain; its full sequence is U5 small nuclear ribonucleoprotein TSSC4 (317 aa).

Residues 1 to 19 (MAETEAGLEVEEPTEDDTL) are compositionally biased toward acidic residues. The interval 1–78 (MAETEAGLEV…IPTTAVQPFH (78 aa)) is disordered. The span at 20-37 (PSDTVSLSDSDSDLSLPS) shows a compositional bias: low complexity. Residues Ser57, Ser64, Ser83, and Ser92 each carry the phosphoserine modification. Residues 74–101 (VQPFHLRGMSSTFSQRSHSIFDCLESAA) form a hom2; mediates interaction with the U5 snRNP complexes and required for spliceosomal tri-snRNP complex assembly region. The tract at residues 123–151 (VAPPSQTPARSLSRVHGNTDPTRVHPVPD) is disordered. The interaction with SNRNP200 stretch occupies residues 146 to 300 (VHPVPDYVSH…SKKRSRDHFR (155 aa)). The tract at residues 147–183 (HPVPDYVSHPERWTKYSLEDVSETSEQSNRDAALAFL) is hom3; mediates interaction with the U5 snRNP complexes. The segment at 198 to 238 (FNQDPSSCGEGRVVFTKPVRGSEARAERKRVLKKGVVSGAG) is hom4; necessary for interaction with the PRPF19 complex and required for spliceosomal tri-snRNP complex assembly. Lys214 bears the N6-acetyllysine mark. A disordered region spans residues 247–317 (HLAGPEAEEW…GPGSERGPSV (71 aa)).

It belongs to the TSSC4 family. Interacts in a RNA-independent manner with distinct U5 snRNP-containing complexes, the mono-U5 snRNP and the post-splicing U5 snRNP-PRPF19 complex. Interacts with SNRNP200; the interaction is direct, excludes recruitment of C9ORF78 and WBP4 to SNRNP200 and negatively regulates its RNA helicase activity. Interacts with PRPF8; the interaction is direct.

It localises to the nucleus. It is found in the cytoplasm. Functionally, protein associated with the U5 snRNP, during its maturation and its post-splicing recycling and which is required for spliceosomal tri-snRNP complex assembly in the nucleus. Has a molecular sequestering activity and transiently hinders SNRNP200 binding sites for constitutive splicing factors that intervene later during the assembly of the spliceosome and splicing. Together with its molecular sequestering activity, may also function as a molecular adapter and placeholder, coordinating the assembly of the U5 snRNP and its association with the U4/U6 di-snRNP. This is U5 small nuclear ribonucleoprotein TSSC4 from Rattus norvegicus (Rat).